Reading from the N-terminus, the 464-residue chain is Argininosuccinate lyase (464 aa).

Belongs to the lyase 1 family. Argininosuccinate lyase subfamily.

The protein localises to the cytoplasm. It catalyses the reaction 2-(N(omega)-L-arginino)succinate = fumarate + L-arginine. It functions in the pathway amino-acid biosynthesis; L-arginine biosynthesis; L-arginine from L-ornithine and carbamoyl phosphate: step 3/3. This chain is Argininosuccinate lyase, found in Pseudomonas putida (strain GB-1).